The following is a 135-amino-acid chain: PTS system sorbose-specific EIIA component (135 aa).

Positions Met1–Val131 constitute a PTS EIIA type-4 domain. His9 serves as the catalytic Tele-phosphohistidine intermediate. A Phosphohistidine; by HPr modification is found at His9.

Its subcellular location is the cytoplasm. Functionally, the phosphoenolpyruvate-dependent sugar phosphotransferase system (PTS), a major carbohydrate active transport system, catalyzes the phosphorylation of incoming sugar substrates concomitant with their translocation across the cell membrane. The enzyme II SorABFM PTS system is involved in L-sorbose transport. The sequence is that of PTS system sorbose-specific EIIA component from Klebsiella pneumoniae.